The following is a 231-amino-acid chain: Large ribosomal subunit protein uL1 (231 aa).

Belongs to the universal ribosomal protein uL1 family. Part of the 50S ribosomal subunit.

Functionally, binds directly to 23S rRNA. The L1 stalk is quite mobile in the ribosome, and is involved in E site tRNA release. Protein L1 is also a translational repressor protein, it controls the translation of the L11 operon by binding to its mRNA. The chain is Large ribosomal subunit protein uL1 from Methylococcus capsulatus (strain ATCC 33009 / NCIMB 11132 / Bath).